A 536-amino-acid polypeptide reads, in one-letter code: MGAWAFPAALFLLCLTSESLQGGLPLLPPGLGKVYGPHSGLGAGYDGGVKPQKPGFVVRHGLGTQPDTEGGMKPQNLGFRTFAGAAAQPGYGNGLGAAAFPVAGAQSGPAAQNGFGPGFGGGGKPQKPGPTTQNGYRPGYVGAVKPQKPGFQYRIGLGAQPGFRGDMKAQEPGLGNGNGLSAQPVLTAQNRFGFGAGLGGNVKPLKPGYGKRLRAGAFPGAGTQPEYGHGNGPGVQPGLGAGMKPQMPGLGAPNGYGPGRGRAGVPGGPERRPWVPHLLPFSSPGYLGVMKAQKPGPLAQNGYRAGAGEGMKPQKPGLRGTLKPQKSGHGHENGPWPGPCNARVAPMLLPRLPTPGVPSDKEGGWGLKSQPPSAVQNGKLPAPMPAIQWGLKPQKAGHQPPNGYGPGAEPGFNGGLEPQKIGLGYGNGVLGARVFPEAHPQPGFHGANGFRNRDGVEALVYPKAAALAPEGNGQAGVLWNSRWPTLQAWGAGLKPGYQAGDEYAEARSQPGGPDVKRGSNGQLGNGYGGRCPLGKC.

An N-terminal signal peptide occupies residues 1–22 (MGAWAFPAALFLLCLTSESLQG). 3 disordered regions span residues 111 to 134 (AQNG…TTQN), 306 to 336 (GAGE…NGPW), and 500 to 536 (GDEY…LGKC). Residues 115-124 (FGPGFGGGGK) are compositionally biased toward gly residues. The segment covering 521-536 (GQLGNGYGGRCPLGKC) has biased composition (gly residues).

The polypeptide is Glycine-rich extracellular protein 1 (Homo sapiens (Human)).